Here is a 312-residue protein sequence, read N- to C-terminus: Olfactory receptor 2L13 (312 aa).

Residues 1 to 24 (MEKWNHTSNDFILLGLLPPNQTGI) lie on the Extracellular side of the membrane. 2 N-linked (GlcNAc...) asparagine glycosylation sites follow: Asn-5 and Asn-20. Residues 25-48 (FLLCLIILIFFLASVGNSAMIHLI) form a helical membrane-spanning segment. At 49–56 (HVDPRLHT) the chain is on the cytoplasmic side. Residues 57 to 78 (PMYFLLSQLSLMDLMYISTTVP) form a helical membrane-spanning segment. Residues 79–99 (KMAYNFLSGQKGISFLGCGVQ) are Extracellular-facing. A disulfide bridge connects residues Cys-96 and Cys-188. A helical membrane pass occupies residues 100-119 (SFFFLTMACSEGLLLTSMAY). Residues 120–138 (DRYLAICHSLYYPIRMSKM) are Cytoplasmic-facing. Residues 139 to 157 (MCVKMIGGSWTLGSINSLA) traverse the membrane as a helical segment. Topologically, residues 158 to 194 (HTVFALHIPYCRSRAIDHFFCDVPAMLLLACTDTWVY) are extracellular. A helical membrane pass occupies residues 195–218 (EYMVFVSTSLFLLFPFIGITSSCG). Residues 219 to 235 (RVLFAVYHMHSKEGRKK) lie on the Cytoplasmic side of the membrane. Residues 236 to 258 (AFTTISTHLTVVIFYYAPFVYTY) traverse the membrane as a helical segment. Residues 259–271 (LRPRNLRSPAEDK) are Extracellular-facing. Residues 272 to 291 (ILAVFYTILTPMLNPIIYSL) form a helical membrane-spanning segment. Residues 292–312 (RNKEVLGAMRRVFGIFSFLKE) are Cytoplasmic-facing.

The protein belongs to the G-protein coupled receptor 1 family.

The protein localises to the cell membrane. Functionally, odorant receptor. This chain is Olfactory receptor 2L13 (OR2L13), found in Homo sapiens (Human).